The sequence spans 229 residues: Sodium channel modifier 1 (229 aa).

A Phosphoserine modification is found at Ser2. The short motif at 4-20 (KREGDDWSQLNVLKKRR) is the Bipartite nuclear localization signal element. The Matrin-type zinc-finger motif lies at 42–74 (FACAICPHRPVLDTLAMLTAHRAGKKHLSSLKL). A Glycyl lysine isopeptide (Lys-Gly) (interchain with G-Cter in SUMO2) cross-link involves residue Lys67. 2 disordered regions span residues 80–105 (QTGKGTEQNPRQQNELKTESKTEAPL) and 128–187 (RRKH…TKRR). Positions 82-92 (GKGTEQNPRQQ) are enriched in polar residues. Residues 157-171 (ISKEPEPRERSDAKE) show a composition bias toward basic and acidic residues. A phosphoserine mark is found at Ser182 and Ser218. Residues 187–229 (RVLNHYLTLRSSGWVPDGRGRWIKDENVEFDSDEEEPPDLPLD) are required for interaction with LUC7L2.

As to quaternary structure, component of the minor spliceosome. Within this complex, interacts with RNF113A, as well as with SF3B1/SF3b155, SF3B2/SF3b145, SF3B3/SF3b130 and CDC5L. May interact with LUC7L2 and SNRNP70.

It is found in the nucleus. Its subcellular location is the nucleoplasm. The protein resides in the nucleus speckle. Functionally, as a component of the minor spliceosome, involved in the splicing of U12-type introns in pre-mRNAs. Plays a role in the regulation of primary cilia length and Hedgehog signaling. This is Sodium channel modifier 1 (Scnm1) from Mus musculus (Mouse).